A 189-amino-acid polypeptide reads, in one-letter code: UPF0312 protein VC_A0539 (189 aa).

A signal peptide spans Met-1–Ala-22.

It belongs to the UPF0312 family. Type 1 subfamily.

Its subcellular location is the periplasm. This Vibrio cholerae serotype O1 (strain ATCC 39315 / El Tor Inaba N16961) protein is UPF0312 protein VC_A0539.